A 377-amino-acid polypeptide reads, in one-letter code: Testis-expressed protein 13A (377 aa).

A required for repression of transcription region spans residues 92–377; it reads WLQDLSSLHK…CGKGIWLQNP (286 aa). Residues 122 to 156 are a coiled coil; it reads QKEVALQLQMAQAKLEEVQRERDLLRLKILQAELR. One copy of the LRR repeat lies at 142–165; it reads ERDLLRLKILQAELRALPNAVRPA. The segment at 345 to 369 adopts a RanBP2-type zinc-finger fold; the sequence is RPGDWDCPWCKAVNFSRRENCFHCG. C351, C354, C365, and C368 together coordinate Zn(2+).

The protein belongs to the TEX13 family. As to quaternary structure, interacts with CNOT1; the interaction may inhibit CNOT1 binding to mRNA and subsequently CNOT1-mediated mRNA degradation.

In terms of biological role, binds to ssRNA containing the consensus sequence 5'-AGGUAA-3'. Plays a role in transcriptional repression. Required for rapid sperm motility and timely degradation of mRNA via its interaction with CNOT1. In Mus musculus (Mouse), this protein is Testis-expressed protein 13A.